The primary structure comprises 467 residues: Probable glutamate decarboxylase gamma (467 aa).

An N6-(pyridoxal phosphate)lysine modification is found at Lys-278.

This sequence belongs to the group II decarboxylase family. The cofactor is pyridoxal 5'-phosphate.

It carries out the reaction L-glutamate + H(+) = 4-aminobutanoate + CO2. The sequence is that of Probable glutamate decarboxylase gamma from Listeria monocytogenes serovar 1/2a (strain ATCC BAA-679 / EGD-e).